We begin with the raw amino-acid sequence, 179 residues long: Large ribosomal subunit protein uL6 (179 aa).

It belongs to the universal ribosomal protein uL6 family. In terms of assembly, part of the 50S ribosomal subunit.

Functionally, this protein binds to the 23S rRNA, and is important in its secondary structure. It is located near the subunit interface in the base of the L7/L12 stalk, and near the tRNA binding site of the peptidyltransferase center. The protein is Large ribosomal subunit protein uL6 of Chlorobium luteolum (strain DSM 273 / BCRC 81028 / 2530) (Pelodictyon luteolum).